The chain runs to 238 residues: Large ribosomal subunit protein uL3 (238 aa).

Disordered regions lie at residues 140–164 (SHRS…KMPG) and 212–238 (LPKE…QEGA). N5-methylglutamine is present on glutamine 151. Low complexity predominate over residues 225 to 238 (AGGEAEAAAQQEGA).

The protein belongs to the universal ribosomal protein uL3 family. In terms of assembly, part of the 50S ribosomal subunit. Forms a cluster with proteins L14 and L19. Post-translationally, methylated by PrmB.

One of the primary rRNA binding proteins, it binds directly near the 3'-end of the 23S rRNA, where it nucleates assembly of the 50S subunit. This Bradyrhizobium diazoefficiens (strain JCM 10833 / BCRC 13528 / IAM 13628 / NBRC 14792 / USDA 110) protein is Large ribosomal subunit protein uL3.